A 309-amino-acid polypeptide reads, in one-letter code: Homoserine O-succinyltransferase (309 aa).

Cys-142 serves as the catalytic Acyl-thioester intermediate. Substrate-binding residues include Lys-163 and Ser-192. Catalysis depends on His-235, which acts as the Proton acceptor. Residue Glu-237 is part of the active site. Residue Arg-249 participates in substrate binding.

This sequence belongs to the MetA family.

The protein resides in the cytoplasm. The enzyme catalyses L-homoserine + succinyl-CoA = O-succinyl-L-homoserine + CoA. Its pathway is amino-acid biosynthesis; L-methionine biosynthesis via de novo pathway; O-succinyl-L-homoserine from L-homoserine: step 1/1. Functionally, transfers a succinyl group from succinyl-CoA to L-homoserine, forming succinyl-L-homoserine. In Edwardsiella ictaluri (strain 93-146), this protein is Homoserine O-succinyltransferase.